A 739-amino-acid polypeptide reads, in one-letter code: UPF0313 protein YgiQ (739 aa).

The Radical SAM core domain occupies 372 to 650 (AYEMIRFSVN…KALLRYHDPA (279 aa)). [4Fe-4S] cluster-binding residues include C386, C390, and C393. A disordered region spans residues 685-739 (REARRQNRNTRPALTKHTPMATQRQTPATAKKASSTQSRPVNAGAKKRPKAAVGR). Positions 704–724 (MATQRQTPATAKKASSTQSRP) are enriched in polar residues. Residues 729–739 (AKKRPKAAVGR) are compositionally biased toward basic residues.

Belongs to the UPF0313 family. [4Fe-4S] cluster is required as a cofactor.

The protein is UPF0313 protein YgiQ of Shigella flexneri.